Here is a 310-residue protein sequence, read N- to C-terminus: Tagatose-6-phosphate kinase (310 aa).

It belongs to the carbohydrate kinase PfkB family. LacC subfamily.

It carries out the reaction D-tagatofuranose 6-phosphate + ATP = D-tagatofuranose 1,6-bisphosphate + ADP + H(+). It participates in carbohydrate metabolism; D-tagatose 6-phosphate degradation; D-glyceraldehyde 3-phosphate and glycerone phosphate from D-tagatose 6-phosphate: step 1/2. This Streptococcus uberis (strain ATCC BAA-854 / 0140J) protein is Tagatose-6-phosphate kinase.